A 261-amino-acid polypeptide reads, in one-letter code: uncharacterized protein (261 aa).

The protein belongs to the FwdC/FmdC family.

This is an uncharacterized protein from Methanocaldococcus jannaschii (strain ATCC 43067 / DSM 2661 / JAL-1 / JCM 10045 / NBRC 100440) (Methanococcus jannaschii).